The following is a 297-amino-acid chain: Translocase of chloroplast 33, chloroplastic (297 aa).

In terms of domain architecture, AIG1-type G spans 34–258 (MNSMTVLVLG…HVDKKMVDGS (225 aa)). Residues 37–53 (MTVLVLGKGGVGKSSTV) form a helical membrane-spanning segment. GTP contacts are provided by residues 46–51 (GVGKSS) and 65–70 (SPFQAE). The Mg(2+) site is built by S50 and Q68. Homodimerization stretches follow at residues 65–68 (SPFQ) and 125–130 (RLDVYR). Position 160 (H160) interacts with GTP. A Phosphoserine modification is found at S181. Position 208–209 (208–209 (EN)) interacts with GTP.

It belongs to the TRAFAC class TrmE-Era-EngA-EngB-Septin-like GTPase superfamily. AIG1/Toc34/Toc159-like paraseptin GTPase family. TOC34 subfamily. Homodimer, heterodimer with TOC34 and TOC159, and monomer. The homodimerization and the dimerization with TOC159 require the binding of GTP on Arg-130, and a hypothetical coGAP factor. The dimeric form has a higher GTPase activity than the monomeric form. Part of the TOC core complex that includes 1 protein for the specific recognition of transit peptides surrounded by a ring composed of four proteins forming translocation channels, and four to five GTP-binding proteins providing energy. This core complex can interact with components of the TIC complex to form a larger import complex. Chloroplastic protein precursor such as prSS (precursor of the RuBisCO small subunit) interacts with these complexes. The TOC complex contains a specific subset of polar lipids such as digalactosyldiacylglyceride (DGDG), phosphatidylcholine (PC) and phosphatidylglycerol (PG). Interacts at least with TOC75-3. Forms large complexes including TOC33, pPORA and OEP161 during pPORA import into plastids at the plastid envelope membrane. Interacts with SP1. Mg(2+) serves as cofactor. Phosphorylated by a kinase present in the outer envelope of chloroplast. When Ser-181 is phosphorylated, the binding to preprotein, GTP and GDP is inhibited, and thus, GTPase activity is repressed. Mostly expressed in seedlings and flowers, and, to a lower extent, in roots, stems, and leaves.

It is found in the plastid. The protein localises to the chloroplast outer membrane. GTPase involved in protein precursor import into chloroplasts. Seems to recognize chloroplast-destined precursor proteins and regulate their presentation to the translocation channel through GTP hydrolysis. Binds GTP, GDP, XTP, but not ATP. Probably specialized in the import of nuclear encoded photosynthetic preproteins from the cytoplasm to the chloroplast, especially during early development stages. The polypeptide is Translocase of chloroplast 33, chloroplastic (TOC33) (Arabidopsis thaliana (Mouse-ear cress)).